We begin with the raw amino-acid sequence, 371 residues long: Aminomethyltransferase (371 aa).

Belongs to the GcvT family. In terms of assembly, the glycine cleavage system is composed of four proteins: P, T, L and H.

The enzyme catalyses N(6)-[(R)-S(8)-aminomethyldihydrolipoyl]-L-lysyl-[protein] + (6S)-5,6,7,8-tetrahydrofolate = N(6)-[(R)-dihydrolipoyl]-L-lysyl-[protein] + (6R)-5,10-methylene-5,6,7,8-tetrahydrofolate + NH4(+). Functionally, the glycine cleavage system catalyzes the degradation of glycine. This Leptospira borgpetersenii serovar Hardjo-bovis (strain JB197) protein is Aminomethyltransferase.